Here is a 212-residue protein sequence, read N- to C-terminus: uncharacterized protein (212 aa).

A run of 4 helical transmembrane segments spans residues 20–40, 70–90, 155–175, and 192–212; these read FLIG…LIIC, LMLL…YWLG, FVLI…YLGE, and QIVI…MEKI.

This sequence belongs to the DedA family.

The protein resides in the cell membrane. This is an uncharacterized protein from Haemophilus influenzae (strain ATCC 51907 / DSM 11121 / KW20 / Rd).